The primary structure comprises 685 residues: Polyphosphate kinase (685 aa).

Asn45 lines the ATP pocket. Arg375 and Arg405 together coordinate Mg(2+). The active-site Phosphohistidine intermediate is His435. ATP contacts are provided by Tyr468, Arg564, and His592.

The protein belongs to the polyphosphate kinase 1 (PPK1) family. Requires Mg(2+) as cofactor. In terms of processing, an intermediate of this reaction is the autophosphorylated ppk in which a phosphate is covalently linked to a histidine residue through a N-P bond.

The catalysed reaction is [phosphate](n) + ATP = [phosphate](n+1) + ADP. In terms of biological role, catalyzes the reversible transfer of the terminal phosphate of ATP to form a long-chain polyphosphate (polyP). In Neisseria meningitidis serogroup C (strain 053442), this protein is Polyphosphate kinase.